Reading from the N-terminus, the 302-residue chain is Proteasome subunit beta (302 aa).

The propeptide at methionine 1–glycine 50 is removed in mature form; by autocatalysis. Threonine 51 acts as the Nucleophile in catalysis. Residues glutamate 277–serine 302 form a disordered region. A compositionally biased stretch (polar residues) spans leucine 287–serine 302.

The protein belongs to the peptidase T1B family. The 20S proteasome core is composed of 14 alpha and 14 beta subunits that assemble into four stacked heptameric rings, resulting in a barrel-shaped structure. The two inner rings, each composed of seven catalytic beta subunits, are sandwiched by two outer rings, each composed of seven alpha subunits. The catalytic chamber with the active sites is on the inside of the barrel. Has a gated structure, the ends of the cylinder being occluded by the N-termini of the alpha-subunits. Is capped by the proteasome-associated ATPase, ARC.

It localises to the cytoplasm. The catalysed reaction is Cleavage of peptide bonds with very broad specificity.. Its pathway is protein degradation; proteasomal Pup-dependent pathway. The formation of the proteasomal ATPase ARC-20S proteasome complex, likely via the docking of the C-termini of ARC into the intersubunit pockets in the alpha-rings, may trigger opening of the gate for substrate entry. Interconversion between the open-gate and close-gate conformations leads to a dynamic regulation of the 20S proteasome proteolysis activity. Its function is as follows. Component of the proteasome core, a large protease complex with broad specificity involved in protein degradation. The polypeptide is Proteasome subunit beta (Jonesia denitrificans (strain ATCC 14870 / DSM 20603 / BCRC 15368 / CIP 55.134 / JCM 11481 / NBRC 15587 / NCTC 10816 / Prevot 55134) (Listeria denitrificans)).